Consider the following 285-residue polypeptide: MPSRTALSPGVLSPTRPVPNWIARPEYVGKPAAQEGSEPWVQTPEVIEKMRVAGRIAAGALAEAGKAVAPGVTTDELDRIAHEYLVDNGAYPSTLGYKGFPKSCCTSLNEVICHGIPDSTVITDGDIVNIDVTAYIGGVHGDTNATFPAGDVADEHRLLVDRTREATMRAINTVKPGRALSVIGRVIESYANRFGYNVVRDFTGHGIGTTFHNGLVVLHYDQPAVETIMQPGMTFTIEPMINLGALDYEIWDDGWTVVTKDRKWTAQFEHTLLVTDTGVEILTCL.

His114 lines the substrate pocket. 3 residues coordinate a divalent metal cation: Asp131, Asp142, and His205. His212 contacts substrate. 2 residues coordinate a divalent metal cation: Glu238 and Glu269.

In terms of assembly, monomer. It depends on Co(2+) as a cofactor. The cofactor is Zn(2+). Mn(2+) serves as cofactor. Fe(2+) is required as a cofactor.

The enzyme catalyses Release of N-terminal amino acids, preferentially methionine, from peptides and arylamides.. With respect to regulation, inhibited by bengamide derivatives and by various metalloform-selective inhibitors. In terms of biological role, removes the N-terminal methionine from nascent proteins. The N-terminal methionine is often cleaved when the second residue in the primary sequence is small and uncharged (Met-Ala-, Cys, Gly, Pro, Ser, Thr, or Val). Requires deformylation of the N(alpha)-formylated initiator methionine before it can be hydrolyzed. The polypeptide is Methionine aminopeptidase 2 (Mycobacterium tuberculosis (strain ATCC 25618 / H37Rv)).